The chain runs to 1116 residues: Surface layer protein (1116 aa).

Residues 1–53 (MQDSGFKKKDRSTNIPQEQFVYTRGGEHKVMKKVVNSVLASALAITVAPMAFA) form the signal peptide. SLH domains lie at 54 to 117 (AEDT…KLAQ), 118 to 181 (FNTT…RGVW), and 182 to 231 (PNSM…YGTD).

The protein localises to the secreted. Its subcellular location is the cell wall. It localises to the S-layer. The chain is Surface layer protein from Brevibacillus choshinensis.